The chain runs to 309 residues: Voltage-dependent anion channel-forming protein mll4386 (309 aa).

3 consecutive transmembrane segments (helical) span residues 32–52 (ILPQIFGFAVYSAVILALARW), 58–78 (GVFNITPFGLVGVTLSIYLSF), and 227–247 (IVCLLLPIGLISTTGWATPLF).

This sequence belongs to the anion channel-forming bestrophin (TC 1.A.46) family.

Its subcellular location is the cell membrane. In Mesorhizobium japonicum (strain LMG 29417 / CECT 9101 / MAFF 303099) (Mesorhizobium loti (strain MAFF 303099)), this protein is Voltage-dependent anion channel-forming protein mll4386.